Reading from the N-terminus, the 348-residue chain is Phospho-2-dehydro-3-deoxyheptonate aldolase, Trp-sensitive (348 aa).

This sequence belongs to the class-I DAHP synthase family.

The catalysed reaction is D-erythrose 4-phosphate + phosphoenolpyruvate + H2O = 7-phospho-2-dehydro-3-deoxy-D-arabino-heptonate + phosphate. It functions in the pathway metabolic intermediate biosynthesis; chorismate biosynthesis; chorismate from D-erythrose 4-phosphate and phosphoenolpyruvate: step 1/7. Its function is as follows. Stereospecific condensation of phosphoenolpyruvate (PEP) and D-erythrose-4-phosphate (E4P) giving rise to 3-deoxy-D-arabino-heptulosonate-7-phosphate (DAHP). In Escherichia coli (strain K12), this protein is Phospho-2-dehydro-3-deoxyheptonate aldolase, Trp-sensitive (aroH).